A 279-amino-acid polypeptide reads, in one-letter code: Pantothenate synthetase (279 aa).

30–37 (MGALHAGH) serves as a coordination point for ATP. The active-site Proton donor is His-37. Position 61 (Gln-61) interacts with (R)-pantoate. Gln-61 provides a ligand contact to beta-alanine. 147–150 (GEKD) contacts ATP. (R)-pantoate is bound at residue Gln-153. Residues Ala-176 and 184-187 (LSSR) contribute to the ATP site.

This sequence belongs to the pantothenate synthetase family. Homodimer.

Its subcellular location is the cytoplasm. The catalysed reaction is (R)-pantoate + beta-alanine + ATP = (R)-pantothenate + AMP + diphosphate + H(+). Its pathway is cofactor biosynthesis; (R)-pantothenate biosynthesis; (R)-pantothenate from (R)-pantoate and beta-alanine: step 1/1. Functionally, catalyzes the condensation of pantoate with beta-alanine in an ATP-dependent reaction via a pantoyl-adenylate intermediate. The sequence is that of Pantothenate synthetase from Sphingopyxis alaskensis (strain DSM 13593 / LMG 18877 / RB2256) (Sphingomonas alaskensis).